Here is a 429-residue protein sequence, read N- to C-terminus: MRDALNTGLIDFLKASPTPFHATASLAQRLEAAGYQRLDERDSWATVPGGRYYVTRNDSSIIAIKLGKQAPLLNGIRMVGAHTDSPCLRVKPQPELQRQGFLQLGVEVYGGALLAPWFDRDLSLAGRVTYRRDGKVESQLIDFKLPIAIIPNLAIHLNRTANEGWAINPQNELPPILAQVAGDERIDFRALLTEQLAREHELIADVVLDYELSFYDTQDAALIGLHGDFIAGARLDNLLSCYAGLQALLAADSDETCVLVCNDHEEVGSCSACGADGPMLEQTLQRLLPDGDSYVRTVQRSLMVSADNAHGVHPNYADKHDGNHGPKLNAGPVIKVNNNQRYATNSETAGFFRHLCMAEEVPVQSFVVRSDMGCGSTIGPITASHLGVRTVDIGLPTFAMHSIRELCGSHDLAHLVKVLTAFYRSRELP.

Zn(2+) is bound by residues His-82, His-156, and His-401.

The protein belongs to the peptidase M18 family. Requires Zn(2+) as cofactor.

The chain is Probable M18 family aminopeptidase 2 from Pseudomonas putida (strain GB-1).